A 330-amino-acid chain; its full sequence is Aspartate--ammonia ligase (330 aa).

Belongs to the class-II aminoacyl-tRNA synthetase family. AsnA subfamily.

The protein resides in the cytoplasm. The enzyme catalyses L-aspartate + NH4(+) + ATP = L-asparagine + AMP + diphosphate + H(+). It functions in the pathway amino-acid biosynthesis; L-asparagine biosynthesis; L-asparagine from L-aspartate (ammonia route): step 1/1. The chain is Aspartate--ammonia ligase from Haemophilus ducreyi (strain 35000HP / ATCC 700724).